The sequence spans 513 residues: Sphingolipid C9-methyltransferase (513 aa).

2 helical membrane-spanning segments follow: residues 52–72 (ILFS…GLGF) and 74–94 (TWVF…WSIM). S-adenosyl-L-methionine contacts are provided by residues 222–223 (YT), 259–267 (VLDIGCGWG), 285–290 (TLGRNQ), and 315–316 (YR).

The protein belongs to the CFA/CMAS family.

Its subcellular location is the membrane. The enzyme catalyses a (4E,8E)-4-sphinga-4,8-dienine ceramide + S-adenosyl-L-methionine = a 9-methyl-(4E,8E)-sphinga-4,8-dienine ceramide + S-adenosyl-L-homocysteine + H(+). It functions in the pathway lipid metabolism; sphingolipid metabolism. Its function is as follows. Catalyzes methylation of the sphingoid base component of glucosylceramides (GluCers) at the C9-position. Sphingolipid C9-methylation requires 4,8-desaturated ceramides as substrates. Glucosylceramides play important roles in growth, differentiation and pathogenicity. The methyl group at the C9-position distinguishes fungal glucosylceramides from those of plants and animals, and may thus play a role in host-pathogen interactions enabling the host to recognize the fungal attack and initiate specific defense responses. Not necessary for vegetative growth at low temperatures, but plays a role in hyphal formation on solid medium. The polypeptide is Sphingolipid C9-methyltransferase (Candida albicans (strain SC5314 / ATCC MYA-2876) (Yeast)).